The primary structure comprises 208 residues: ATP-dependent Clp protease proteolytic subunit (208 aa).

Ser105 acts as the Nucleophile in catalysis. His130 is a catalytic residue.

It belongs to the peptidase S14 family. As to quaternary structure, fourteen ClpP subunits assemble into 2 heptameric rings which stack back to back to give a disk-like structure with a central cavity, resembling the structure of eukaryotic proteasomes.

It localises to the cytoplasm. The catalysed reaction is Hydrolysis of proteins to small peptides in the presence of ATP and magnesium. alpha-casein is the usual test substrate. In the absence of ATP, only oligopeptides shorter than five residues are hydrolyzed (such as succinyl-Leu-Tyr-|-NHMec, and Leu-Tyr-Leu-|-Tyr-Trp, in which cleavage of the -Tyr-|-Leu- and -Tyr-|-Trp bonds also occurs).. In terms of biological role, cleaves peptides in various proteins in a process that requires ATP hydrolysis. Has a chymotrypsin-like activity. Plays a major role in the degradation of misfolded proteins. In Xanthomonas axonopodis pv. citri (strain 306), this protein is ATP-dependent Clp protease proteolytic subunit.